Consider the following 485-residue polypeptide: Alginate biosynthesis protein AlgA (485 aa).

Belongs to the mannose-6-phosphate isomerase type 2 family. As to quaternary structure, monomer. Co(2+) is required as a cofactor.

The enzyme catalyses D-mannose 6-phosphate = D-fructose 6-phosphate. It catalyses the reaction alpha-D-mannose 1-phosphate + GTP + H(+) = GDP-alpha-D-mannose + diphosphate. The protein operates within nucleotide-sugar biosynthesis; GDP-alpha-D-mannose biosynthesis; GDP-alpha-D-mannose from alpha-D-mannose 1-phosphate (GTP route): step 1/1. It functions in the pathway nucleotide-sugar biosynthesis; GDP-alpha-D-mannose biosynthesis; alpha-D-mannose 1-phosphate from D-fructose 6-phosphate: step 1/2. Produces a precursor for alginate polymerization. The alginate layer provides a protective barrier against host immune defenses and antibiotics. This is Alginate biosynthesis protein AlgA (algA) from Pseudomonas putida (strain ATCC 47054 / DSM 6125 / CFBP 8728 / NCIMB 11950 / KT2440).